The primary structure comprises 705 residues: MHKDWTIDVAGGKMKFETGKYAKQANGSVVARYGDTTVLVTATMSEPREGIDYFPLMVNYEERVYAIGKIPGSITRREGRPRDVATLAARLIDRPLRPLFPEGFRHDVQIIATVLSVDNDCEPDILALNGASVALTLSDIPFDGPIGGVKVGLVDGELVINPDEEEREKSKLDLTVAGTRDAVLMVEAGANEVSEDVMLDAIELAHQEIKRLVLLQEEIGEEAGKKKFEFTKDEITPELDEEIRKYISSDMENALRIPEKLERNAKVDEIKENTLQYFEDMFENNGLDNEEKNKQLKMVERTIEKVMKEKVRKMIIEEGIRPDGRKPDEIRPIWCEVGTLPRVHGSGVFTRGQTQALSVVTLGATSDEQILFGLGEEETKRYMHHYNFPPYSVGETSPLRSPGRREIGHGALGERALQPVIPDQEEFPYTIRVVSEVLESNGSTSQASICGSTLALMDAGVPIKEPVAGIAMGLLKEDEKVVILSDIQGLEDFYGDMDFKVAGTRNGITALQMDIKIHGISKEILKKALKRAREGRLYILDKMLQVIDKPRPELSPYAPLMITMKVSPDKIRHIIGPGGKIINKIIDETGVEIDIDDDGSVYILAQDQESGNRAKEIINKLTKEVEVGDIYEGRVKKITNFGAFVEILPGREGLVHISELADHHVKKVEDIVKIGDRIPVKVIEIDELGRINLSRKRALKEQKKE.

The Mg(2+) site is built by Asp492 and Asp498. The KH domain maps to 559 to 618; that stretch reads PLMITMKVSPDKIRHIIGPGGKIINKIIDETGVEIDIDDDGSVYILAQDQESGNRAKEII. The 69-residue stretch at 628–696 folds into the S1 motif domain; that stretch reads GDIYEGRVKK…ELGRINLSRK (69 aa).

It belongs to the polyribonucleotide nucleotidyltransferase family. Requires Mg(2+) as cofactor.

It is found in the cytoplasm. It carries out the reaction RNA(n+1) + phosphate = RNA(n) + a ribonucleoside 5'-diphosphate. Functionally, involved in mRNA degradation. Catalyzes the phosphorolysis of single-stranded polyribonucleotides processively in the 3'- to 5'-direction. This is Polyribonucleotide nucleotidyltransferase from Halothermothrix orenii (strain H 168 / OCM 544 / DSM 9562).